The primary structure comprises 512 residues: Methionine--tRNA ligase (512 aa).

A 'HIGH' region motif is present at residues Tyr-11–His-21. Residues Cys-126, Cys-129, Cys-143, and His-147 each coordinate Zn(2+). A 'KMSKS' region motif is present at residues Lys-301–Ser-305. Lys-304 contributes to the ATP binding site.

Belongs to the class-I aminoacyl-tRNA synthetase family. MetG type 2A subfamily. As to quaternary structure, monomer. Zn(2+) is required as a cofactor.

It localises to the cytoplasm. The enzyme catalyses tRNA(Met) + L-methionine + ATP = L-methionyl-tRNA(Met) + AMP + diphosphate. Functionally, is required not only for elongation of protein synthesis but also for the initiation of all mRNA translation through initiator tRNA(fMet) aminoacylation. The polypeptide is Methionine--tRNA ligase (metG) (Mycoplasma genitalium (strain ATCC 33530 / DSM 19775 / NCTC 10195 / G37) (Mycoplasmoides genitalium)).